Here is a 578-residue protein sequence, read N- to C-terminus: Proline--tRNA ligase (578 aa).

This sequence belongs to the class-II aminoacyl-tRNA synthetase family. ProS type 1 subfamily. Homodimer.

The protein resides in the cytoplasm. It carries out the reaction tRNA(Pro) + L-proline + ATP = L-prolyl-tRNA(Pro) + AMP + diphosphate. Functionally, catalyzes the attachment of proline to tRNA(Pro) in a two-step reaction: proline is first activated by ATP to form Pro-AMP and then transferred to the acceptor end of tRNA(Pro). As ProRS can inadvertently accommodate and process non-cognate amino acids such as alanine and cysteine, to avoid such errors it has two additional distinct editing activities against alanine. One activity is designated as 'pretransfer' editing and involves the tRNA(Pro)-independent hydrolysis of activated Ala-AMP. The other activity is designated 'posttransfer' editing and involves deacylation of mischarged Ala-tRNA(Pro). The misacylated Cys-tRNA(Pro) is not edited by ProRS. This Burkholderia mallei (strain ATCC 23344) protein is Proline--tRNA ligase.